The primary structure comprises 381 residues: Choline transport ATP-binding protein OpuBA (381 aa).

The region spanning 2–236 is the ABC transporter domain; sequence LTLENVSKTY…PADEFVEEFI (235 aa). 35 to 42 provides a ligand contact to ATP; that stretch reads GPSGCGKT. 2 consecutive CBS domains span residues 256–314 and 316–374; these read MNTQ…LVSE and LHED…WGEE.

It belongs to the ABC transporter superfamily.

In terms of biological role, involved in a high affinity multicomponent binding-protein-dependent transport system for choline. Probably responsible for energy coupling to the transport system. The sequence is that of Choline transport ATP-binding protein OpuBA (opuBA) from Bacillus subtilis (strain 168).